The chain runs to 688 residues: Polyphosphate kinase (688 aa).

N45 contributes to the ATP binding site. Mg(2+) contacts are provided by R375 and R405. A PLD phosphodiesterase domain is found at 430–464; it reads PGLKIHAKLFLISRKEGDDVVRYAHIGTGNFNEKT. H435 acts as the Phosphohistidine intermediate in catalysis. Y468, R564, and H592 together coordinate ATP.

The protein belongs to the polyphosphate kinase 1 (PPK1) family. Requires Mg(2+) as cofactor. An intermediate of this reaction is the autophosphorylated ppk in which a phosphate is covalently linked to a histidine residue through a N-P bond.

The enzyme catalyses [phosphate](n) + ATP = [phosphate](n+1) + ADP. In terms of biological role, catalyzes the reversible transfer of the terminal phosphate of ATP to form a long-chain polyphosphate (polyP). The polypeptide is Polyphosphate kinase (Salmonella typhimurium (strain LT2 / SGSC1412 / ATCC 700720)).